A 638-amino-acid chain; its full sequence is Guanylate-binding protein 7 (638 aa).

The interval 1 to 310 is GTPase domain (Globular); it reads MASEIHMPGP…DAINSGATPC (310 aa). The region spanning 35–277 is the GB1/RHD3-type G domain; sequence TQPVVVVAIV…FCSYIFTHAK (243 aa). GTP contacts are provided by residues 45–52, 67–69, and 97–101; these read GLYRTGKS, LGC, and DTEGL. The tract at residues 311-638 is interaction with the CYBA-CYBB complex; sequence LENAMAVLAQ…LRNPGKKIIS (328 aa). Residues 590 to 638 form a C-terminal tail; required for its localization to cytoplasmic vesicle region; it reads PSVFSQILDVAGSIFIAALPGAAKLVDLGMKILSSLCNRLRNPGKKIIS.

It belongs to the TRAFAC class dynamin-like GTPase superfamily. GB1/RHD3 GTPase family. GB1 subfamily. As to quaternary structure, monomer and dimer. Interacts with CYBA, CYBA-CYBB complex and ATG4B. Interacts (via GB1/RHD3-type G domain) with NCF2 and NCF2-NCF4 complex.

It localises to the cytoplasmic vesicle membrane. The catalysed reaction is GTP + H2O = GDP + phosphate + H(+). It catalyses the reaction GDP + H2O = GMP + phosphate + H(+). Its function is as follows. Interferon (IFN)-inducible GTPase that plays important roles in innate immunity against a diverse range of bacterial, viral and protozoan pathogens. Hydrolyzes GTP to GMP in two consecutive cleavage reactions and predominantly uses GTP and not GDP or GMP as the substrate. Following infection, recruited to the pathogen-containing vacuoles or vacuole-escaped bacteria and acts as a positive regulator of inflammasome assembly by promoting the release of inflammasome ligands from bacteria. Acts by promoting lysis of pathogen-containing vacuoles, releasing pathogens into the cytosol. Following pathogen release in the cytosol, promotes recruitment of proteins that mediate bacterial cytolysis: this liberates ligands that are detected by inflammasomes, such as lipopolysaccharide (LPS) that activates the non-canonical CASP4/CASP11 inflammasome or double-stranded DNA (dsDNA) that activates the AIM2 inflammasome. Also promotes IFN-gamma-mediated host defense against bacterial infections by regulating oxidative responses and bacteriolytic peptide generation. May help to assemble NADPH oxidase on phagosomal membranes by acting as a bridging protein between NADPH oxidase cytosolic subunits NCF2-NCF4 and the membrane subunits CYBA-CYBB. Participates along with GBP1 in trafficking monoubiquinated protein cargo to autolysosomes for generating ubiquitin-derived antimicrobial peptides. Facilitates influenza A virus replication by inhibiting the activation of NF-kappaB and JAK-STAT signaling pathways and the expression of type I, type III interferons and pro-inflammatory cytokines. Confers protection to several pathogens, including the bacterial pathogens Listeria monocytogenes and Mycobacterium bovis BCG as well as the protozoan pathogen Toxoplasma gondii. Required for disruption of the parasitophorous vacuole formed following T.gondii infection and subsequent killing of the parasite. The chain is Guanylate-binding protein 7 (GBP7) from Homo sapiens (Human).